The following is a 419-amino-acid chain: MSGNSSTDLYLFKKSLKELKGKKGKGTELISVYVPAGRRLSDISQYLRQELSQSSNIKSKTTMKNVQSAIEVILQRLKLLKEPLEMGVIIFAGMIPRGGPGTEKMEVYVLEPPEPVKTFVYRCDSLFYTDPLEDFIQDNEVYGVILVDRNEATIGTVRGKTITILKKLTSGVPGKFKAGGQSARRLERLIDDAAHQFMVRIGEYATESFMPILEEKKLKGLLLGGPGNTKNEFAEKDYLHHELKKKIIDTFDLCYTEEFGIRELLDKASDLLRDIDLMKEKNLIQRFFKELIKDDGGLSAYGEAQVMKYLEMGAIDTLIVTEDIGITRVTVKCNNCDITQEVNVKTNEMFKFEEQLKTKACPTCGGAMYIDEEKDIIEYLSDLCNMHNTDLIVVSTDTEEGSQISRAFKGMAAILRYKL.

Belongs to the eukaryotic release factor 1 family. As to quaternary structure, heterodimer of two subunits, one of which binds GTP.

The protein resides in the cytoplasm. In terms of biological role, directs the termination of nascent peptide synthesis (translation) in response to the termination codons UAA, UAG and UGA. The polypeptide is Peptide chain release factor subunit 1 (Methanococcus maripaludis (strain DSM 14266 / JCM 13030 / NBRC 101832 / S2 / LL)).